The sequence spans 421 residues: 4-hydroxy-3-methylbut-2-en-1-yl diphosphate synthase (flavodoxin) (421 aa).

A disordered region spans residues 1–20 (MHDAVTRPTPPSDATSWPRR). [4Fe-4S] cluster is bound by residues C311, C314, C357, and E364.

The protein belongs to the IspG family. [4Fe-4S] cluster serves as cofactor.

The enzyme catalyses (2E)-4-hydroxy-3-methylbut-2-enyl diphosphate + oxidized [flavodoxin] + H2O + 2 H(+) = 2-C-methyl-D-erythritol 2,4-cyclic diphosphate + reduced [flavodoxin]. The protein operates within isoprenoid biosynthesis; isopentenyl diphosphate biosynthesis via DXP pathway; isopentenyl diphosphate from 1-deoxy-D-xylulose 5-phosphate: step 5/6. Converts 2C-methyl-D-erythritol 2,4-cyclodiphosphate (ME-2,4cPP) into 1-hydroxy-2-methyl-2-(E)-butenyl 4-diphosphate. The chain is 4-hydroxy-3-methylbut-2-en-1-yl diphosphate synthase (flavodoxin) from Stenotrophomonas maltophilia (strain R551-3).